Reading from the N-terminus, the 344-residue chain is Protein BREVIS RADIX (344 aa).

In terms of domain architecture, BRX 1 spans 139 to 194 (KEWMAQVEPGVHITFASLPTGGNDLKRIRFSREMFDKWQAQRWWGENYDKIVELYN). Residues 203-286 (LQTPARSDDQ…DPPSMSNASE (84 aa)) form a disordered region. Residues 223–233 (DSARESKDWTP) are compositionally biased toward basic and acidic residues. Residues 248–264 (YGGSSNYGPGSYHGGPP) are compositionally biased toward low complexity. The BRX 2 domain maps to 289-344 (AEWIEEDEPGVYITIRQLSDGTRELRRVRFSRERFGEVHAKTWWEQNRERIQTQYL).

Belongs to the BRX family. Homodimer and heterodimer with BRXL1. Interacts with NGA1 and ARF5. In terms of tissue distribution, expressed in the developing protophloem up to the elongation zone in root meristem of young seedlings, in the columella and the phloem vasculature throughout the root and in the phloem vasculature in the shoot. Detected in the shoot meristem and in primordia. Low expression in stomata. Confined to sieve element precursor cells and to protophloem.

It is found in the nucleus. Its subcellular location is the cell membrane. Functionally, acts as a regulator of cell proliferation and elongation in the root and shoot. Regulates roots architecture and primary root protophloem differentiation. BRX, BAM3, and CLE45 act together to regulate the transition of protophloem cells from proliferation to differentiation, thus impinging on postembryonic growth capacity of the root meristem. Probable transcription regulator. Regulated by the auxin response factor ARF5. Polarly localized in vascular cells and subject to endocytic recycling. Required for CPD expression and for correct nuclear auxin response. Mediates cross-talk between the auxin and brassinosteroid pathways. BRX is a target for auxin-induced, proteasome-mediated degradation. This Arabidopsis thaliana (Mouse-ear cress) protein is Protein BREVIS RADIX.